The following is a 255-amino-acid chain: 14-3-3-like protein GF14 psi (255 aa).

Phosphoserine is present on serine 66. Threonine 162 is modified (phosphothreonine). Serine 189 carries the post-translational modification Phosphoserine. A phosphothreonine mark is found at threonine 210 and threonine 238.

This sequence belongs to the 14-3-3 family. In terms of assembly, component of a DNA binding complex that binds to the G box. Interacts with IDH3, AGT3, GLN1-1, GLN1-2, GLN1-4, SAM1, SAM2, MDH1, METK3 and MDH2. Binds to 1-aminocyclopropane-1-carboxylate synthases (ACS) such as ACS2, ACS5, ACS6, ACS8, and ACS11. Interacts with FD. Interacts with DREB1A and DREB1B in the nucleus. Interacts with CINV1.

The protein resides in the cytoplasm. The protein localises to the nucleus. In terms of biological role, is associated with a DNA binding complex that binds to the G box, a well-characterized cis-acting DNA regulatory element found in plant genes. Involved in the regulation of nutrient metabolism. Reciprocal negative transcription regulation of miR396. Negative regulator of constitutive freezing tolerance and cold acclimation by controlling cold-induced gene expression partially through an ethylene (ET)-dependent pathway; prevents ethylene (ET) biosynthesis, probably by binding 1-aminocyclopropane-1-carboxylate synthases (ACS) to reduce their stability, thus contributing to establish adequate ET levels under both standard and low-temperature conditions. This Arabidopsis thaliana (Mouse-ear cress) protein is 14-3-3-like protein GF14 psi.